We begin with the raw amino-acid sequence, 88 residues long: Small ribosomal subunit protein uS17 (88 aa).

It belongs to the universal ribosomal protein uS17 family. In terms of assembly, part of the 30S ribosomal subunit.

Functionally, one of the primary rRNA binding proteins, it binds specifically to the 5'-end of 16S ribosomal RNA. This Prochlorococcus marinus (strain NATL1A) protein is Small ribosomal subunit protein uS17.